The chain runs to 114 residues: Nucleoid-associated protein Tlet_0999 (114 aa).

Belongs to the YbaB/EbfC family. Homodimer.

The protein localises to the cytoplasm. Its subcellular location is the nucleoid. In terms of biological role, binds to DNA and alters its conformation. May be involved in regulation of gene expression, nucleoid organization and DNA protection. The polypeptide is Nucleoid-associated protein Tlet_0999 (Pseudothermotoga lettingae (strain ATCC BAA-301 / DSM 14385 / NBRC 107922 / TMO) (Thermotoga lettingae)).